We begin with the raw amino-acid sequence, 132 residues long: Large ribosomal subunit protein bL17 (132 aa).

This sequence belongs to the bacterial ribosomal protein bL17 family. In terms of assembly, part of the 50S ribosomal subunit. Contacts protein L32.

The chain is Large ribosomal subunit protein bL17 from Cellvibrio japonicus (strain Ueda107) (Pseudomonas fluorescens subsp. cellulosa).